The sequence spans 607 residues: Elongation factor 4 (607 aa).

In terms of domain architecture, tr-type G spans 11–193 (ENIRNFSIIA…KIVEVVPPPE (183 aa)). Residues 23–28 (DHGKST) and 140–143 (NKID) contribute to the GTP site.

The protein belongs to the TRAFAC class translation factor GTPase superfamily. Classic translation factor GTPase family. LepA subfamily.

The protein resides in the cell membrane. It catalyses the reaction GTP + H2O = GDP + phosphate + H(+). Functionally, required for accurate and efficient protein synthesis under certain stress conditions. May act as a fidelity factor of the translation reaction, by catalyzing a one-codon backward translocation of tRNAs on improperly translocated ribosomes. Back-translocation proceeds from a post-translocation (POST) complex to a pre-translocation (PRE) complex, thus giving elongation factor G a second chance to translocate the tRNAs correctly. Binds to ribosomes in a GTP-dependent manner. In Staphylococcus haemolyticus (strain JCSC1435), this protein is Elongation factor 4.